Here is an 817-residue protein sequence, read N- to C-terminus: Sorting nexin-29 (817 aa).

An RUN domain is found at 37 to 181 (SDSDSRVTCL…ILFAINIDNK (145 aa)). Phosphoserine occurs at positions 269, 292, 293, 331, and 345. Residues 271–299 (DDEEDEQSSGDVFKKIPGAGESSEENSDR) are disordered. 2 disordered regions span residues 344–381 (KSID…LDAG) and 417–460 (APLG…LPSA). Positions 347-358 (DDEDADENEDDV) are enriched in acidic residues. Basic and acidic residues predominate over residues 369 to 378 (GHSESPEKPL). The span at 445 to 460 (SPPGQESPLSSLLPSA) shows a compositional bias: low complexity. Ser451 is subject to Phosphoserine. Positions 466–546 (MTVSDLRQAI…VLKVQLKKYV (81 aa)) form a coiled coil. Phosphoserine is present on Ser641. Thr643 is subject to Phosphothreonine. A phosphoserine mark is found at Ser644 and Ser648. The 124-residue stretch at 658–781 (ALINVWIPSV…PFFVDITPPG (124 aa)) folds into the PX domain. A disordered region spans residues 784-817 (LTKNSRPKVASRFPKLARGHPRETRNVEPQSGDL).

The protein belongs to the sorting nexin family.

The sequence is that of Sorting nexin-29 (SNX29) from Bos taurus (Bovine).